The chain runs to 429 residues: MKTSILILAAGLGTRMKSQKPKVLQELCQKSMILHILKKAFALSDDVSVVLSHQKERVEKEILEYFPKTQILEQDLQNYPGTAGALRGFEPKNERVLILCGDMPLVEQTSLEALLSNNAKLNLAVFKARDPKSYGRVVIKNDSVEKIVEFKDANTQEKEINTCNAGVYVIDSRLLKELLPLIDNNNAAKEYYLTDIVKLAKEKDVMIKAVFVDEDEFMGINDKFELSIAENFMQEKIKKYWMQQGVIFHLPQSTFIGTDVEFMGECEVYENVRIEGKSKIINSIIKSSSVIENSIVENSDVGPLAHLRPNCELKNTHIGNFVECKNAKLNTVKAGHLSYLGDCEIDSGTNIGCGTITCNYDGVKKHKTIIGKNVFVGSDTQFIAPVKIEDEVIIAAGSTVSVNVEKGALFINRAEHKMIKDYYYKKFQK.

The interval 1–223 is pyrophosphorylase; the sequence is MKTSILILAA…EDEFMGINDK (223 aa). UDP-N-acetyl-alpha-D-glucosamine is bound by residues 8 to 11, lysine 22, and 81 to 82; these read LAAG and GT. Aspartate 102 is a Mg(2+) binding site. UDP-N-acetyl-alpha-D-glucosamine contacts are provided by glycine 135, glutamate 149, asparagine 164, and asparagine 221. Asparagine 221 is a Mg(2+) binding site. Positions 224–244 are linker; the sequence is FELSIAENFMQEKIKKYWMQQ. An N-acetyltransferase region spans residues 245–429; sequence GVIFHLPQST…KDYYYKKFQK (185 aa). UDP-N-acetyl-alpha-D-glucosamine contacts are provided by arginine 308 and lysine 325. The active-site Proton acceptor is the histidine 336. Tyrosine 339 and asparagine 350 together coordinate UDP-N-acetyl-alpha-D-glucosamine. Residues 359 to 360, serine 378, alanine 396, and arginine 413 contribute to the acetyl-CoA site; that span reads NY.

This sequence in the N-terminal section; belongs to the N-acetylglucosamine-1-phosphate uridyltransferase family. The protein in the C-terminal section; belongs to the transferase hexapeptide repeat family. Homotrimer. Mg(2+) is required as a cofactor.

Its subcellular location is the cytoplasm. It carries out the reaction alpha-D-glucosamine 1-phosphate + acetyl-CoA = N-acetyl-alpha-D-glucosamine 1-phosphate + CoA + H(+). The catalysed reaction is N-acetyl-alpha-D-glucosamine 1-phosphate + UTP + H(+) = UDP-N-acetyl-alpha-D-glucosamine + diphosphate. It participates in nucleotide-sugar biosynthesis; UDP-N-acetyl-alpha-D-glucosamine biosynthesis; N-acetyl-alpha-D-glucosamine 1-phosphate from alpha-D-glucosamine 6-phosphate (route II): step 2/2. It functions in the pathway nucleotide-sugar biosynthesis; UDP-N-acetyl-alpha-D-glucosamine biosynthesis; UDP-N-acetyl-alpha-D-glucosamine from N-acetyl-alpha-D-glucosamine 1-phosphate: step 1/1. The protein operates within bacterial outer membrane biogenesis; LPS lipid A biosynthesis. Catalyzes the last two sequential reactions in the de novo biosynthetic pathway for UDP-N-acetylglucosamine (UDP-GlcNAc). The C-terminal domain catalyzes the transfer of acetyl group from acetyl coenzyme A to glucosamine-1-phosphate (GlcN-1-P) to produce N-acetylglucosamine-1-phosphate (GlcNAc-1-P), which is converted into UDP-GlcNAc by the transfer of uridine 5-monophosphate (from uridine 5-triphosphate), a reaction catalyzed by the N-terminal domain. This Campylobacter jejuni subsp. jejuni serotype O:6 (strain 81116 / NCTC 11828) protein is Bifunctional protein GlmU.